The sequence spans 282 residues: Glutamyl endopeptidase (282 aa).

The first 27 residues, 1–27 (MKKRFLSICTMTIAALATTTMVNTSYA), serve as a signal peptide directing secretion. The propeptide occupies 28–66 (KTDTESHNHSSLGTENKNVLDINSSSHNIKPSQNKSYPS). Residues histidine 117, aspartate 159, and serine 235 each act as charge relay system in the active site.

This sequence belongs to the peptidase S1B family.

The protein localises to the secreted. It carries out the reaction Preferential cleavage: Glu-|-Xaa, Asp-|-Xaa.. Its function is as follows. Exhibits a significant hydrolytic activity for the carbonyl side of glutamic acid. Shows activity toward human fibronectin and type 1 collagen. The sequence is that of Glutamyl endopeptidase (gseA) from Staphylococcus epidermidis (strain ATCC 35984 / DSM 28319 / BCRC 17069 / CCUG 31568 / BM 3577 / RP62A).